The sequence spans 288 residues: ATP synthase gamma chain (288 aa).

It belongs to the ATPase gamma chain family. In terms of assembly, F-type ATPases have 2 components, CF(1) - the catalytic core - and CF(0) - the membrane proton channel. CF(1) has five subunits: alpha(3), beta(3), gamma(1), delta(1), epsilon(1). CF(0) has three main subunits: a, b and c.

It localises to the cell membrane. Its function is as follows. Produces ATP from ADP in the presence of a proton gradient across the membrane. The gamma chain is believed to be important in regulating ATPase activity and the flow of protons through the CF(0) complex. This Staphylococcus aureus (strain bovine RF122 / ET3-1) protein is ATP synthase gamma chain.